An 810-amino-acid polypeptide reads, in one-letter code: DNA gyrase subunit A (810 aa).

Positions 36 to 502 (LPDVRDGLKP…EVLKTSMSDL (467 aa)) constitute a Topo IIA-type catalytic domain. The active-site O-(5'-phospho-DNA)-tyrosine intermediate is tyrosine 124. The GyrA-box signature appears at 529–535 (QGIGGKG).

It belongs to the type II topoisomerase GyrA/ParC subunit family. In terms of assembly, heterotetramer, composed of two GyrA and two GyrB chains. In the heterotetramer, GyrA contains the active site tyrosine that forms a transient covalent intermediate with DNA, while GyrB binds cofactors and catalyzes ATP hydrolysis.

Its subcellular location is the cytoplasm. It catalyses the reaction ATP-dependent breakage, passage and rejoining of double-stranded DNA.. A type II topoisomerase that negatively supercoils closed circular double-stranded (ds) DNA in an ATP-dependent manner to modulate DNA topology and maintain chromosomes in an underwound state. Negative supercoiling favors strand separation, and DNA replication, transcription, recombination and repair, all of which involve strand separation. Also able to catalyze the interconversion of other topological isomers of dsDNA rings, including catenanes and knotted rings. Type II topoisomerases break and join 2 DNA strands simultaneously in an ATP-dependent manner. The sequence is that of DNA gyrase subunit A from Borrelia hermsii (strain HS1 / DAH).